The chain runs to 196 residues: Pantothenic acid transporter PanT (196 aa).

The next 6 membrane-spanning stretches (helical) occupy residues 10–30 (AILAIFIAIMVVVQLFTQFVI), 35–55 (FPVKPTLLHLPVIIGSIILGW), 58–78 (GAFLGLVWGLISFVTATIVTT), 99–119 (WGLFIAFIPRILVGILPYFVY), 131–151 (AAFAGTATNTVLVLTSIFLFF), and 161–181 (YLLGAIVATNSLTEVIIAVIL).

As to quaternary structure, in E.coli forms a stable energy-coupling factor (ECF) transporter complex composed of 2 membrane-embedded substrate-binding protein (S component), 2 ATP-binding proteins (A and A' components) and 2 transmembrane proteins (T component), probably with a stoichiometry of 2:1:1:2. May be able to interact with more than 1 S component at a time.

Its subcellular location is the cell membrane. In terms of biological role, probably a pantothenic acid-binding protein that interacts with the energy-coupling factor (ECF) ABC-transporter complex. Unlike classic ABC transporters this ECF transporter provides the energy necessary to transport a number of different substrates. The substrates themselves are bound by transmembrane, not extracytoplasmic soluble proteins. This Lactococcus lactis subsp. cremoris (strain MG1363) protein is Pantothenic acid transporter PanT (panT).